A 140-amino-acid polypeptide reads, in one-letter code: MYSQQRIFNSKYFIFFIAVLSIFWLPTMSARNLENSKNENGISGSNSGNGKMNSQYNTGSPSAYYSAKHNLRSMLMAPKDYQQKLHAKIPLNLDLMDFLLEYEDEDRSKRFDDYGHMRFGKRGGEEQFDDYGHMRFGRSI.

An N-terminal signal peptide occupies residues M1–A30. A propeptide spanning residues R31–K109 is cleaved from the precursor. Position 114 is a sulfotyrosine (Y114). F119 carries the post-translational modification Phenylalanine amide. Residue Y131 is modified to Sulfotyrosine. Position 136 is a phenylalanine amide (F136). A propeptide spanning residues S139 to I140 is cleaved from the precursor.

It belongs to the gastrin/cholecystokinin family. In brain, it is specifically expressed in four pairs of neurons. Not expressed in other cells of the brain and in the thoracico-abdominal ganglion.

The protein localises to the secreted. Callisulfakinin I is a neuropeptide. The existence of Callisulfakinin II is uncertain. The chain is Callisulfakinin from Calliphora vomitoria (Blue bottle fly).